Here is a 273-residue protein sequence, read N- to C-terminus: Urease accessory protein UreD (273 aa).

It belongs to the UreD family. In terms of assembly, ureD, UreF and UreG form a complex that acts as a GTP-hydrolysis-dependent molecular chaperone, activating the urease apoprotein by helping to assemble the nickel containing metallocenter of UreC. The UreE protein probably delivers the nickel.

The protein resides in the cytoplasm. Required for maturation of urease via the functional incorporation of the urease nickel metallocenter. This chain is Urease accessory protein UreD, found in Mycolicibacterium gilvum (strain PYR-GCK) (Mycobacterium gilvum (strain PYR-GCK)).